The primary structure comprises 113 residues: Protein Rev (113 aa).

The interval 15-23 is homomultimerization; it reads LIKFLYQSN. The interval 17-45 is disordered; sequence KFLYQSNPPPSPEGTRQARRNRRRRWRQR. The Nuclear localization signal and RNA-binding (RRE) signature appears at 31-47; it reads TRQARRNRRRRWRQRQR. Residues 33–45 are compositionally biased toward basic residues; that stretch reads QARRNRRRRWRQR. Positions 70 to 81 match the Nuclear export signal and binding to XPO1 motif; it reads LQLPPLERLTLD. 2 positions are modified to phosphoserine; by host: Ser-89 and Ser-96. The disordered stretch occupies residues 89 to 113; sequence SGTQGVGSPQILVESPTILESGTKE.

This sequence belongs to the HIV-1 REV protein family. Homomultimer; when bound to the RRE. Multimeric assembly is essential for activity and may involve XPO1. Binds to human KPNB1, XPO1, TNPO1, RANBP5 and IPO7. Interacts with the viral Integrase. Interacts with human KHDRBS1. Interacts with human NAP1; this interaction decreases Rev multimerization and stimulates its activity. Interacts with human DEAD-box helicases DDX3 and DDX24; these interactions may serve for viral RNA export to the cytoplasm and packaging, respectively. Interacts with human PSIP1; this interaction may inhibit HIV-1 DNA integration by promoting dissociation of the Integrase-LEDGF/p75 complex. Asymmetrically arginine dimethylated at one site by host PRMT6. Methylation impairs the RNA-binding activity and export of viral RNA from the nucleus to the cytoplasm. In terms of processing, phosphorylated by protein kinase CK2. Presence of, and maybe binding to the N-terminus of the regulatory beta subunit of CK2 is necessary for CK2-mediated Rev's phosphorylation.

The protein localises to the host nucleus. Its subcellular location is the host nucleolus. It is found in the host cytoplasm. Its function is as follows. Escorts unspliced or incompletely spliced viral pre-mRNAs (late transcripts) out of the nucleus of infected cells. These pre-mRNAs carry a recognition sequence called Rev responsive element (RRE) located in the env gene, that is not present in fully spliced viral mRNAs (early transcripts). This function is essential since most viral proteins are translated from unspliced or partially spliced pre-mRNAs which cannot exit the nucleus by the pathway used by fully processed cellular mRNAs. Rev itself is translated from a fully spliced mRNA that readily exits the nucleus. Rev's nuclear localization signal (NLS) binds directly to KPNB1/Importin beta-1 without previous binding to KPNA1/Importin alpha-1. KPNB1 binds to the GDP bound form of RAN (Ran-GDP) and targets Rev to the nucleus. In the nucleus, the conversion from Ran-GDP to Ran-GTP dissociates Rev from KPNB1 and allows Rev's binding to the RRE in viral pre-mRNAs. Rev multimerization on the RRE via cooperative assembly exposes its nuclear export signal (NES) to the surface. Rev can then form a complex with XPO1/CRM1 and Ran-GTP, leading to nuclear export of the complex. Conversion from Ran-GTP to Ran-GDP mediates dissociation of the Rev/RRE/XPO1/RAN complex, so that Rev can return to the nucleus for a subsequent round of export. Beside KPNB1, also seems to interact with TNPO1/Transportin-1, RANBP5/IPO5 and IPO7/RANBP7 for nuclear import. The nucleoporin-like HRB/RIP is an essential cofactor that probably indirectly interacts with Rev to release HIV RNAs from the perinuclear region to the cytoplasm. The polypeptide is Protein Rev (Human immunodeficiency virus type 1 group M subtype B (isolate JH32) (HIV-1)).